Here is a 537-residue protein sequence, read N- to C-terminus: Pheophorbide a oxygenase, chloroplastic (537 aa).

Residues 1 to 49 constitute a chloroplast transit peptide; it reads MSVVLLSSTSATITKSQSKKIPFLSPTTKFPLKVSISPSRSKLFHNPLR. The interval 51-77 is disordered; the sequence is AAPPSVPTSDSTEEKRIEEEYGGDKEE. Residues 62–77 show a composition bias toward basic and acidic residues; sequence TEEKRIEEEYGGDKEE. Positions 88–200 constitute a Rieske domain; it reads WYPVSLVEDL…TMVSQGLLFV (113 aa). Residues cysteine 130, histidine 132, cysteine 150, and histidine 153 each contribute to the [2Fe-2S] cluster site.

In terms of assembly, interacts with HCAR, SGR1, RCCR, PPH and the LHCII complex. Part of a SGR1-CCE-LHCII complex, which acts in chlorophyll breakdown.

Its subcellular location is the plastid. It is found in the chloroplast thylakoid membrane. The enzyme catalyses pheophorbide a + 2 reduced [2Fe-2S]-[ferredoxin] + O2 + 2 H(+) = red chlorophyll catabolite + 2 oxidized [2Fe-2S]-[ferredoxin]. The protein operates within porphyrin-containing compound metabolism; chlorophyll degradation. With respect to regulation, might be regulated by a phosphorylation/dephosphorylation mechanism. Its function is as follows. Catalyzes the key reaction of chlorophyll catabolism, porphyrin macrocycle cleavage of pheophorbide a (pheide a) to a primary fluorescent catabolite (pFCC). Works in a two-step reaction with red chlorophyll catabolite reductase (RCCR). Creates the intermediate RCC through the opening of the porphyrin macrocycle by the introduction of one atom of molecular oxygen at the alpha-methine bridge. Seems to be specific for pheide a. Belongs to the chlorophyll catabolic enzymes (CCEs). This Arabidopsis thaliana (Mouse-ear cress) protein is Pheophorbide a oxygenase, chloroplastic (PAO).